The sequence spans 84 residues: Small ribosomal subunit protein uS17 (84 aa).

The protein belongs to the universal ribosomal protein uS17 family. As to quaternary structure, part of the 30S ribosomal subunit.

Functionally, one of the primary rRNA binding proteins, it binds specifically to the 5'-end of 16S ribosomal RNA. This is Small ribosomal subunit protein uS17 from Serratia proteamaculans (strain 568).